Reading from the N-terminus, the 602-residue chain is Alpha-glucosides permease MPH3 (602 aa).

Residues 1–106 are Cytoplasmic-facing; that stretch reads MKNLSFLINR…AAAWSLLVST (106 aa). A helical membrane pass occupies residues 107 to 127; the sequence is TLIMEGYDTAILGAFYALPIF. Residues 128–142 are Extracellular-facing; the sequence is QRKFGSQNDKTGEWE. The chain crosses the membrane as a helical span at residues 143 to 163; the sequence is ISASWQIGLTLCYMAGEIVGL. The Cytoplasmic portion of the chain corresponds to 164–178; sequence QLTGPSVDLVGNRYT. The helical transmembrane segment at 179–199 threads the bilayer; it reads LIIALFFLAAFTFILYFCNSL. Glycine 200 is a topological domain (extracellular). The helical transmembrane segment at 201–221 threads the bilayer; that stretch reads MIAVGQALCGMPWGCFQCLTV. The Cytoplasmic segment spans residues 222 to 234; sequence SYASEICPLALRY. A helical membrane pass occupies residues 235 to 255; that stretch reads YLTTYSNLCWLFGQLFAAGIM. Over 256-270 the chain is Extracellular; sequence KNSQKKYADSELGYK. A helical transmembrane segment spans residues 271–291; the sequence is LPFALQWILPVPLALGIFFAP. At 292-363 the chain is on the cytoplasmic side; that stretch reads ESPWWLVKKG…EDKINRRRTR (72 aa). The chain crosses the membrane as a helical span at residues 364–384; the sequence is ITCLCWAGQATCGSILIGYST. At 385–397 the chain is on the extracellular side; sequence YFYEKAGVSTEMS. Residues 398 to 418 form a helical membrane-spanning segment; that stretch reads FTFSIIQYCLGICATFLSWWA. Residues 419-426 lie on the Cytoplasmic side of the membrane; it reads SKYFGRYD. The chain crosses the membrane as a helical span at residues 427–447; sequence LYAFGLAFQTIVFFIIGGLGC. Topologically, residues 448–459 are extracellular; it reads SSTHGSKMGSGS. Residues 460–480 form a helical membrane-spanning segment; sequence LLMAVAFFYNLGIAPVVFCLV. The Cytoplasmic portion of the chain corresponds to 481 to 492; that stretch reads SEMPSSRLRTKT. The chain crosses the membrane as a helical span at residues 493 to 513; sequence IILARNTYNVVSIICSVLILY. The Extracellular segment spans residues 514 to 525; the sequence is QLNSKKWNWGAK. Residues 526–546 form a helical membrane-spanning segment; sequence SGFFWGVLCFCTLIWAVVDLP. Residues 547–602 are Cytoplasmic-facing; the sequence is ETAGKTFVEINELFKLGVSARKFKSTKVDPFVVKNTPKYVSHNDPKGDIEASIAEE.

Belongs to the major facilitator superfamily. Sugar transporter (TC 2.A.1.1) family.

It is found in the cell membrane. Its function is as follows. High-affinity uptake of maltose and maltotriose. Also transports alpha-methylglucoside, glucose and turanose but not melezitose or trehalose. The polypeptide is Alpha-glucosides permease MPH3 (MPH3) (Saccharomyces cerevisiae (strain YJM789) (Baker's yeast)).